Reading from the N-terminus, the 643-residue chain is Probable potassium transport system protein Kup 2 (643 aa).

A disordered region spans residues 1–20 (MSSHVPSFLRGTPDMTAHGG). 12 helical membrane passes run 27–47 (VAGL…TSPL), 70–90 (VLSL…VIII), 120–140 (LMVS…SIIT), 157–177 (PHLE…LFAI), 185–205 (VGKM…ILGI), 231–251 (GWHA…AEAL), 267–287 (WYLL…ALLI), 300–320 (LAPA…TVIA), 357–377 (IYLP…VVGF), 389–409 (VAVT…MLLI), 419–439 (WLIG…SIKI), and 440–460 (PDGG…LTTW).

It belongs to the HAK/KUP transporter (TC 2.A.72) family.

It is found in the cell inner membrane. The catalysed reaction is K(+)(in) + H(+)(in) = K(+)(out) + H(+)(out). Functionally, transport of potassium into the cell. Likely operates as a K(+):H(+) symporter. This Paramagnetospirillum magneticum (strain ATCC 700264 / AMB-1) (Magnetospirillum magneticum) protein is Probable potassium transport system protein Kup 2.